A 164-amino-acid chain; its full sequence is 6,7-dimethyl-8-ribityllumazine synthase (164 aa).

5-amino-6-(D-ribitylamino)uracil is bound by residues F22, 56 to 58 (AWE), and 80 to 82 (AVI). 85–86 (DT) provides a ligand contact to (2S)-2-hydroxy-3-oxobutyl phosphate. The active-site Proton donor is the H88. Position 113 (L113) interacts with 5-amino-6-(D-ribitylamino)uracil. R127 serves as a coordination point for (2S)-2-hydroxy-3-oxobutyl phosphate.

It belongs to the DMRL synthase family.

The enzyme catalyses (2S)-2-hydroxy-3-oxobutyl phosphate + 5-amino-6-(D-ribitylamino)uracil = 6,7-dimethyl-8-(1-D-ribityl)lumazine + phosphate + 2 H2O + H(+). It participates in cofactor biosynthesis; riboflavin biosynthesis; riboflavin from 2-hydroxy-3-oxobutyl phosphate and 5-amino-6-(D-ribitylamino)uracil: step 1/2. Catalyzes the formation of 6,7-dimethyl-8-ribityllumazine by condensation of 5-amino-6-(D-ribitylamino)uracil with 3,4-dihydroxy-2-butanone 4-phosphate. This is the penultimate step in the biosynthesis of riboflavin. The sequence is that of 6,7-dimethyl-8-ribityllumazine synthase from Gemmatimonas aurantiaca (strain DSM 14586 / JCM 11422 / NBRC 100505 / T-27).